The following is a 504-amino-acid chain: Probable protein phosphatase 2C 18 (504 aa).

The segment at 1–49 (MGLCYSVDRTTGKEPGEASSTATTAETVEERSGSGRWRRPRDLKGGGDI) is disordered. Residues 17–26 (EASSTATTAE) are compositionally biased toward low complexity. The PPM-type phosphatase domain maps to 67 to 399 (IACLYTQQGK…DDCTVVCLFL (333 aa)). Mn(2+) contacts are provided by aspartate 103, glycine 104, aspartate 344, and aspartate 390. Residues 410-435 (TNVKKDSPKEESIESVTNSTSKEEDE) form a disordered region. Basic and acidic residues predominate over residues 412–421 (VKKDSPKEES).

The protein belongs to the PP2C family. Mg(2+) is required as a cofactor. It depends on Mn(2+) as a cofactor.

It catalyses the reaction O-phospho-L-seryl-[protein] + H2O = L-seryl-[protein] + phosphate. It carries out the reaction O-phospho-L-threonyl-[protein] + H2O = L-threonyl-[protein] + phosphate. This Arabidopsis thaliana (Mouse-ear cress) protein is Probable protein phosphatase 2C 18.